The chain runs to 39 residues: Cytochrome b559 subunit beta (39 aa).

The helical transmembrane segment at 14–30 threads the bilayer; the sequence is WLAVHGLAIPTVSFLGS. Position 18 (histidine 18) interacts with heme.

It belongs to the PsbE/PsbF family. In terms of assembly, heterodimer of an alpha subunit and a beta subunit. PSII is composed of 1 copy each of membrane proteins PsbA, PsbB, PsbC, PsbD, PsbE, PsbF, PsbH, PsbI, PsbJ, PsbK, PsbL, PsbM, PsbT, PsbX, PsbY, PsbZ, Psb30/Ycf12, at least 3 peripheral proteins of the oxygen-evolving complex and a large number of cofactors. It forms dimeric complexes. The cofactor is heme b.

It localises to the plastid. Its subcellular location is the chloroplast thylakoid membrane. Functionally, this b-type cytochrome is tightly associated with the reaction center of photosystem II (PSII). PSII is a light-driven water:plastoquinone oxidoreductase that uses light energy to abstract electrons from H(2)O, generating O(2) and a proton gradient subsequently used for ATP formation. It consists of a core antenna complex that captures photons, and an electron transfer chain that converts photonic excitation into a charge separation. The polypeptide is Cytochrome b559 subunit beta (Beta vulgaris (Sugar beet)).